The primary structure comprises 302 residues: Ribosomal RNA small subunit methyltransferase H (302 aa).

S-adenosyl-L-methionine contacts are provided by residues G43–H45, D62, F89, D105, and H112. The segment at E276 to N302 is disordered.

Belongs to the methyltransferase superfamily. RsmH family.

The protein localises to the cytoplasm. It catalyses the reaction cytidine(1402) in 16S rRNA + S-adenosyl-L-methionine = N(4)-methylcytidine(1402) in 16S rRNA + S-adenosyl-L-homocysteine + H(+). Its function is as follows. Specifically methylates the N4 position of cytidine in position 1402 (C1402) of 16S rRNA. The protein is Ribosomal RNA small subunit methyltransferase H of Nostoc sp. (strain PCC 7120 / SAG 25.82 / UTEX 2576).